The following is a 78-amino-acid chain: Alpha-neurotoxin homolog 7 (78 aa).

The first 21 residues, 1–21, serve as a signal peptide directing secretion; it reads MKTLLLTLVVVTIVCLDFGYT. 4 cysteine pairs are disulfide-bonded: C24/C42, C37/C57, C59/C70, and C71/C76.

The protein belongs to the three-finger toxin family. Short-chain subfamily. Orphan group XII sub-subfamily. In terms of tissue distribution, expressed by the venom gland.

The protein resides in the secreted. This is Alpha-neurotoxin homolog 7 from Micrurus corallinus (Brazilian coral snake).